A 236-amino-acid chain; its full sequence is Aspartate/glutamate leucyltransferase (236 aa).

The protein belongs to the R-transferase family. Bpt subfamily.

It is found in the cytoplasm. It carries out the reaction N-terminal L-glutamyl-[protein] + L-leucyl-tRNA(Leu) = N-terminal L-leucyl-L-glutamyl-[protein] + tRNA(Leu) + H(+). The enzyme catalyses N-terminal L-aspartyl-[protein] + L-leucyl-tRNA(Leu) = N-terminal L-leucyl-L-aspartyl-[protein] + tRNA(Leu) + H(+). Functionally, functions in the N-end rule pathway of protein degradation where it conjugates Leu from its aminoacyl-tRNA to the N-termini of proteins containing an N-terminal aspartate or glutamate. The chain is Aspartate/glutamate leucyltransferase from Saccharophagus degradans (strain 2-40 / ATCC 43961 / DSM 17024).